Reading from the N-terminus, the 140-residue chain is Small ribosomal subunit protein uS12 (140 aa).

Asp-102 is modified (3-methylthioaspartic acid).

The protein belongs to the universal ribosomal protein uS12 family. Part of the 30S ribosomal subunit. Contacts proteins S8 and S17. May interact with IF1 in the 30S initiation complex.

Its function is as follows. With S4 and S5 plays an important role in translational accuracy. Interacts with and stabilizes bases of the 16S rRNA that are involved in tRNA selection in the A site and with the mRNA backbone. Located at the interface of the 30S and 50S subunits, it traverses the body of the 30S subunit contacting proteins on the other side and probably holding the rRNA structure together. The combined cluster of proteins S8, S12 and S17 appears to hold together the shoulder and platform of the 30S subunit. The chain is Small ribosomal subunit protein uS12 from Geobacillus sp. (strain WCH70).